The chain runs to 505 residues: ATP synthase subunit alpha (505 aa).

170–177 (GDRQTGKS) contributes to the ATP binding site.

The protein belongs to the ATPase alpha/beta chains family. As to quaternary structure, F-type ATPases have 2 components, CF(1) - the catalytic core - and CF(0) - the membrane proton channel. CF(1) has five subunits: alpha(3), beta(3), gamma(1), delta(1), epsilon(1). CF(0) has four main subunits: a(1), b(1), b'(1) and c(9-12).

The protein localises to the cellular thylakoid membrane. It catalyses the reaction ATP + H2O + 4 H(+)(in) = ADP + phosphate + 5 H(+)(out). Its function is as follows. Produces ATP from ADP in the presence of a proton gradient across the membrane. The alpha chain is a regulatory subunit. This Prochlorococcus marinus (strain AS9601) protein is ATP synthase subunit alpha.